The sequence spans 222 residues: Probable fimbrial chaperone EcpB (222 aa).

The first 20 residues, 1–20 (MKKHLLPLALLLSGISPAQA), serve as a signal peptide directing secretion.

Belongs to the EcpB/EcpE family.

Functionally, part of the ecpRABCDE operon, which encodes the E.coli common pilus (ECP). ECP is found in both commensal and pathogenic strains and plays a dual role in early-stage biofilm development and host cell recognition. This is Probable fimbrial chaperone EcpB (ecpB) from Escherichia coli O7:K1 (strain IAI39 / ExPEC).